The sequence spans 448 residues: Proteases secretion protein PrtE (448 aa).

The Cytoplasmic portion of the chain corresponds to 1 to 30 (MTGMDITTQDELNEAAMRDRASRDEERALR). Residues 31–50 (LGWWLVLAGFGGFLLWALLA) traverse the membrane as a helical segment. Topologically, residues 51 to 448 (PLDKGVAVQG…DRMHLALTEE (398 aa)) are periplasmic.

Belongs to the membrane fusion protein (MFP) (TC 8.A.1) family.

The protein resides in the cell inner membrane. Involved in the secretion of proteases A, B, C and G. This chain is Proteases secretion protein PrtE (prtE), found in Dickeya chrysanthemi (Pectobacterium chrysanthemi).